The chain runs to 197 residues: dTTP/UTP pyrophosphatase (197 aa).

Aspartate 70 serves as the catalytic Proton acceptor.

It belongs to the Maf family. YhdE subfamily. It depends on a divalent metal cation as a cofactor.

The protein localises to the cytoplasm. It carries out the reaction dTTP + H2O = dTMP + diphosphate + H(+). The catalysed reaction is UTP + H2O = UMP + diphosphate + H(+). Its function is as follows. Nucleoside triphosphate pyrophosphatase that hydrolyzes dTTP and UTP. May have a dual role in cell division arrest and in preventing the incorporation of modified nucleotides into cellular nucleic acids. In Pectobacterium atrosepticum (strain SCRI 1043 / ATCC BAA-672) (Erwinia carotovora subsp. atroseptica), this protein is dTTP/UTP pyrophosphatase.